The chain runs to 587 residues: 5-aminolevulinate synthase, erythroid-specific, mitochondrial (587 aa).

The transit peptide at 1–49 directs the protein to the mitochondrion; sequence MVTAAMLLQCCPVPARGPTSLLGKVVKTHQFLFGIGRCPILATQGPNCS. Succinyl-CoA is bound at residue R163. Pyridoxal 5'-phosphate is bound by residues C258 and F259. Succinyl-CoA-binding residues include S280 and K299. The pyridoxal 5'-phosphate site is built by S332, H360, and T388. Residue K391 is part of the active site. N6-(pyridoxal phosphate)lysine is present on K391. Positions 420 and 421 each coordinate pyridoxal 5'-phosphate. T508 lines the succinyl-CoA pocket.

The protein belongs to the class-II pyridoxal-phosphate-dependent aminotransferase family. In terms of assembly, homodimer. Interacts with SUCLA2. Pyridoxal 5'-phosphate is required as a cofactor.

The protein resides in the mitochondrion inner membrane. It catalyses the reaction succinyl-CoA + glycine + H(+) = 5-aminolevulinate + CO2 + CoA. It participates in porphyrin-containing compound metabolism; protoporphyrin-IX biosynthesis; 5-aminolevulinate from glycine: step 1/1. Catalyzes the pyridoxal 5'-phosphate (PLP)-dependent condensation of succinyl-CoA and glycine to form aminolevulinic acid (ALA), with CoA and CO2 as by-products. Contributes significantly to heme formation during erythropoiesis. This Pongo abelii (Sumatran orangutan) protein is 5-aminolevulinate synthase, erythroid-specific, mitochondrial (ALAS2).